The chain runs to 918 residues: Importin subunit beta-2 (918 aa).

HEAT repeat units follow at residues 11–38 (YVLQLATLLQNCMSPNPEIRNNAMEAME), 43–92 (QPEF…GGNN), 103–137 (YVKSNIIHGLYNSNNNLVSNVTGIVITTLFSTYYR), 145–181 (GLQMLYQLLELTSNGNEPSIKALSKIMEDSAQFFQLE), 190–222 (EALLDSFFRFISNPNFSPVIRSESVKCINTVIP), 235–263 (FLEIIFQLAQNDENDLVRAQICISFSFLL), 275–303 (DGIVQFMLHLITTVNEEKVAIEACEFLHA), 320–413 (KDIV…MTNI), 421–449 (IAFPFLREHLGSDRWFIREATILALGAMA), 461–488 (PALIPFLVEQLNDKWAPVRKMTCWTLSR), 501–534 (LIPVLEPIINTLMDKKKDVQEAAISSVAVFIENA), 542–577 (LFYSQLLTSFDKCLKYYKKKNLIILYDAIGRFAEKC), 583–620 (AMQIILPPLIEKWALLSDSDKELWPLLECLSCVASSLG), 628–678 (PEVY…GLGA), 694–725 (ILKIMLECLQDPVHEVRQSCFALLGDIVYFFN), 777–814 (IDMSRIILDLFTTNTQIVDSSVMENLSVTIGKMGLTHP), 825–858 (DSNWNKWCLSVNALDDVEEKSSAYMGFLKIINLT), and 867–900 (DTIHKIVTGLSSNVEANVFAQEIYTFLMNHSAQI). Positions 361-395 (APRIVKKKEAGNGEDADDNEDDDDDDDDEDGDVDT) are disordered. Residues 372–393 (NGEDADDNEDDDDDDDDEDGDV) are compositionally biased toward acidic residues.

The protein belongs to the importin beta family. Importin beta-2 subfamily. As to quaternary structure, interacts with Ran (GSP1); interacts specifically with the GTP-bound form of Ran (GTP-Ran), protecting it from GTP hydrolysis and nucleotide exchange. Interacts with nucleoporins NUP1, NUP100 and NUP116. Interacts with NAB2 and HRP1/NAB4; via their rg-NLS. Interacts with TFG2; via its PY-NLS.

The protein resides in the cytoplasm. It is found in the nucleus. It localises to the nuclear pore complex. Its function is as follows. Functions in nuclear protein import as nuclear transport receptor. Serves as receptor for arginine/glycine-rich nuclear localization signals (rg-NLS) and PY-NLS in cargo substrates. Its predominant cargo substrate seems to be mRNA-binding proteins. Required for nuclear transport of NAB2, HRP1/NAB4 and TFG2. Mediates docking of the importin/substrate complex to the nuclear pore complex (NPC) through binding to repeat-containing nucleoporins. The complex is subsequently translocated through the pore by an energy requiring, Ran-dependent mechanism. At the nucleoplasmic side of the NPC, GTP-Ran binding leads to release of the cargo. Efficient GTP-Ran-mediated substrate release requires RNA. The importin is re-exported from the nucleus to the cytoplasm where GTP hydrolysis releases Ran from importin. The directionality of nuclear import is thought to be conferred by an asymmetric distribution of the GTP- and GDP-bound forms of Ran between the cytoplasm and nucleus. This chain is Importin subunit beta-2, found in Saccharomyces cerevisiae (strain ATCC 204508 / S288c) (Baker's yeast).